Consider the following 172-residue polypeptide: FMN reductase (NADH) RutF 2 (172 aa).

Belongs to the non-flavoprotein flavin reductase family. RutF subfamily.

It carries out the reaction FMNH2 + NAD(+) = FMN + NADH + 2 H(+). In terms of biological role, catalyzes the reduction of FMN to FMNH2 which is used to reduce pyrimidine by RutA via the Rut pathway. The chain is FMN reductase (NADH) RutF 2 from Methylorubrum extorquens (strain PA1) (Methylobacterium extorquens).